We begin with the raw amino-acid sequence, 436 residues long: Gamma-glutamyl phosphate reductase (436 aa).

The protein belongs to the gamma-glutamyl phosphate reductase family.

The protein resides in the cytoplasm. It carries out the reaction L-glutamate 5-semialdehyde + phosphate + NADP(+) = L-glutamyl 5-phosphate + NADPH + H(+). It participates in amino-acid biosynthesis; L-proline biosynthesis; L-glutamate 5-semialdehyde from L-glutamate: step 2/2. In terms of biological role, catalyzes the NADPH-dependent reduction of L-glutamate 5-phosphate into L-glutamate 5-semialdehyde and phosphate. The product spontaneously undergoes cyclization to form 1-pyrroline-5-carboxylate. The protein is Gamma-glutamyl phosphate reductase of Polaromonas sp. (strain JS666 / ATCC BAA-500).